We begin with the raw amino-acid sequence, 393 residues long: Probable N-acetyl-LL-diaminopimelate aminotransferase (393 aa).

Position 231 is an N6-(pyridoxal phosphate)lysine (Lys231).

The protein belongs to the class-I pyridoxal-phosphate-dependent aminotransferase family. Homodimer. Requires pyridoxal 5'-phosphate as cofactor.

The protein localises to the cytoplasm. The catalysed reaction is N-acetyl-(2S,6S)-2,6-diaminopimelate + 2-oxoglutarate = L-2-acetamido-6-oxoheptanedioate + L-glutamate. It participates in amino-acid biosynthesis; L-lysine biosynthesis via DAP pathway; LL-2,6-diaminopimelate from (S)-tetrahydrodipicolinate (acetylase route): step 2/3. Its function is as follows. Essential for murein biosynthesis. Probably catalyzes the conversion of L-2-acetamido-6-oxopimelate to N-acetyl-LL-2,6-diaminopimelate. This chain is Probable N-acetyl-LL-diaminopimelate aminotransferase, found in Bacillus subtilis (strain 168).